The sequence spans 173 residues: MYVSMLFGFSYVFWLIGVSSNISVYYGVVSLVCTAGTGCVVLAWKGGSFLALVLFLIYLGGMLVIFAYSITLVMEPFPEVMGDWVGVMHAGKYVVLAVVFVLVGWGWWGVGECGDGVVDAGGLSIVRVDSSGLSLLYAIGGGALMMAMFGLFLTFFIVLVLVQGLFRVACPTI.

The next 4 membrane-spanning stretches (helical) occupy residues 12-32, 47-67, 94-114, and 142-162; these read VFWL…VSLV, GSFL…VIFA, VVLA…GECG, and GALM…LVLV.

It belongs to the complex I subunit 6 family.

The protein localises to the mitochondrion membrane. The enzyme catalyses a ubiquinone + NADH + 5 H(+)(in) = a ubiquinol + NAD(+) + 4 H(+)(out). Functionally, core subunit of the mitochondrial membrane respiratory chain NADH dehydrogenase (Complex I) that is believed to belong to the minimal assembly required for catalysis. Complex I functions in the transfer of electrons from NADH to the respiratory chain. The immediate electron acceptor for the enzyme is believed to be ubiquinone. The polypeptide is NADH-ubiquinone oxidoreductase chain 6 (MT-ND6) (Pelomedusa subrufa (African side-necked turtle)).